A 434-amino-acid chain; its full sequence is Chaperone SurA (434 aa).

A signal peptide spans 1–22 (MKHSKKIIFALLALAMSNTSMA). PpiC domains are found at residues 173 to 274 (DVEF…KVVD) and 283 to 383 (VEEV…QLES).

Its subcellular location is the periplasm. The catalysed reaction is [protein]-peptidylproline (omega=180) = [protein]-peptidylproline (omega=0). In terms of biological role, chaperone involved in the correct folding and assembly of outer membrane proteins. Recognizes specific patterns of aromatic residues and the orientation of their side chains, which are found more frequently in integral outer membrane proteins. May act in both early periplasmic and late outer membrane-associated steps of protein maturation. In Shewanella frigidimarina (strain NCIMB 400), this protein is Chaperone SurA.